Consider the following 339-residue polypeptide: MQMNSLNDPKHLVKAVVRGEIKCLDVRAQSKYEISHLRKSVNIPSEKISKCWYQLPAKQEELFVVEDQGDKIETEETGTCAQQLKKRGWNIAGHFMFSHKIWEDLSLPQNELLESGPNRNLLFEPCPYLKEVMPVVEKGIKTNNARVLDIGCGSGRDLAWICFRESGKHWMVSALDAEKRAIQRFSELFSGLGLEDRIEGKKVAKVDASGLWKLYTRDGKQEPNATAISLADMLADFQNVPEGDVYKYDLVLQIRFLNRALLRQSSSLLRNNGFLFLCTFVNDGVHQYEHPRGSDHRFEKGEAAAIVSESDGRIRVLKDEIGFIEDGRPVQILLAQKVE.

One can recognise a Rhodanese domain in the interval 17-111; that stretch reads VRGEIKCLDV…WEDLSLPQNE (95 aa).

This is an uncharacterized protein from Schizosaccharomyces pombe (strain 972 / ATCC 24843) (Fission yeast).